The primary structure comprises 815 residues: Protein pygopus (815 aa).

2 disordered regions span residues 1–107 (MTHN…QVSA) and 147–711 (GMGG…GPMG). A Nuclear localization signal motif is present at residues 39–45 (PKKRRKT). Over residues 46–73 (SSAANSAAAVAAAAAAAAAANSMQQQQA) the composition is skewed to low complexity. Residues 74 to 86 (PPTPQDLLPPPPM) show a composition bias toward pro residues. Low complexity predominate over residues 188-199 (RGMSPMHPHQMG). 2 stretches are compositionally biased toward gly residues: residues 230–248 (PMGG…GMGG) and 257–269 (GMGG…GGPN). The span at 307–316 (LGPPSGPGPG) shows a compositional bias: pro residues. 4 stretches are compositionally biased toward low complexity: residues 323–341 (GPQQ…NGQM), 407–424 (SNNN…NQNP), 444–478 (PSVS…VPTS), and 495–545 (GPSP…HQQH). Pro residues predominate over residues 569-580 (PQQPSHLGPPHP). A compositionally biased stretch (gly residues) spans 602–621 (GGPGMHGGPAGMPPHMGGGP). Low complexity predominate over residues 622–636 (NPHMMGGPHGNAGPH). The segment covering 640–656 (GHMGGVPGPGPGPGGMN) has biased composition (gly residues). Over residues 663-675 (MSPHHGHPHHHHN) the composition is skewed to basic residues. Gly residues predominate over residues 678–711 (GGPGPNMFGGGGGGPMGPGGPMGNMGPMGGGPMG). The PHD-type zinc finger occupies 747 to 805 (IYPCGMCHKEVNDNDEAVFCESGCNFFFHRTCVGLTEAAFQMLNKEVFAEWCCDKCVSS).

In terms of assembly, binds to BCL9 via the PHD-type zinc finger motif, and thereby becomes part of the nuclear ARM/PAN complex. As to expression, ubiquitous throughout embryogenesis and larval development.

It localises to the nucleus. In terms of biological role, involved in signal transduction through the Wnt pathway. The protein is Protein pygopus (pygo) of Drosophila melanogaster (Fruit fly).